We begin with the raw amino-acid sequence, 166 residues long: NAD(P)H-quinone oxidoreductase subunit I, chloroplastic (166 aa).

4Fe-4S ferredoxin-type domains are found at residues 55-84 (GRIHFEFDKCIACEVCVRVCPIDLPVVDWK) and 95-124 (LNYSIDFGICIFCGNCVEYCPTNCLSMTEE). [4Fe-4S] cluster is bound by residues Cys-64, Cys-67, Cys-70, Cys-74, Cys-104, Cys-107, Cys-110, and Cys-114.

The protein belongs to the complex I 23 kDa subunit family. In terms of assembly, NDH is composed of at least 16 different subunits, 5 of which are encoded in the nucleus. It depends on [4Fe-4S] cluster as a cofactor.

It localises to the plastid. The protein resides in the chloroplast thylakoid membrane. The catalysed reaction is a plastoquinone + NADH + (n+1) H(+)(in) = a plastoquinol + NAD(+) + n H(+)(out). The enzyme catalyses a plastoquinone + NADPH + (n+1) H(+)(in) = a plastoquinol + NADP(+) + n H(+)(out). Its function is as follows. NDH shuttles electrons from NAD(P)H:plastoquinone, via FMN and iron-sulfur (Fe-S) centers, to quinones in the photosynthetic chain and possibly in a chloroplast respiratory chain. The immediate electron acceptor for the enzyme in this species is believed to be plastoquinone. Couples the redox reaction to proton translocation, and thus conserves the redox energy in a proton gradient. In Hofmeisteria fasciculata (Helogyne fasciculata), this protein is NAD(P)H-quinone oxidoreductase subunit I, chloroplastic.